Here is a 1390-residue protein sequence, read N- to C-terminus: DNA-directed RNA polymerase subunit beta (1390 aa).

The protein belongs to the RNA polymerase beta chain family. In terms of assembly, the RNAP catalytic core consists of 2 alpha, 1 beta, 1 beta' and 1 omega subunit. When a sigma factor is associated with the core the holoenzyme is formed, which can initiate transcription.

The enzyme catalyses RNA(n) + a ribonucleoside 5'-triphosphate = RNA(n+1) + diphosphate. DNA-dependent RNA polymerase catalyzes the transcription of DNA into RNA using the four ribonucleoside triphosphates as substrates. The sequence is that of DNA-directed RNA polymerase subunit beta from Chromobacterium violaceum (strain ATCC 12472 / DSM 30191 / JCM 1249 / CCUG 213 / NBRC 12614 / NCIMB 9131 / NCTC 9757 / MK).